Reading from the N-terminus, the 121-residue chain is Large ribosomal subunit protein uL14 (121 aa).

The protein belongs to the universal ribosomal protein uL14 family. In terms of assembly, part of the 50S ribosomal subunit. Forms a cluster with proteins L3 and L19. In the 70S ribosome, L14 and L19 interact and together make contacts with the 16S rRNA in bridges B5 and B8.

Binds to 23S rRNA. Forms part of two intersubunit bridges in the 70S ribosome. The sequence is that of Large ribosomal subunit protein uL14 from Opitutus terrae (strain DSM 11246 / JCM 15787 / PB90-1).